A 132-amino-acid chain; its full sequence is Interleukin-5 (132 aa).

The N-terminal stretch at 1 to 19 is a signal peptide; the sequence is MRMLLHLSILTLACVWTFA. N-linked (GlcNAc...) asparagine glycans are attached at residues asparagine 45, asparagine 74, and asparagine 88.

Belongs to the IL-5 family. In terms of assembly, homodimer; disulfide-linked. Interacts with IL5RA. Interacts with CSF2RB.

It is found in the secreted. Functionally, homodimeric cytokine expressed predominantly by T-lymphocytes and NK cells that plays an important role in the survival, differentiation, and chemotaxis of eosinophils. Also acts on activated and resting B-cells to induce immunoglobulin production, growth, and differentiation. Mechanistically, exerts its biological effects through a receptor composed of IL5RA subunit and the cytokine receptor common subunit beta/CSF2RB. Binding to the receptor leads to activation of various kinases including LYN, SYK and JAK2 and thereby propagates signals through the RAS-MAPK and JAK-STAT5 pathways respectively. The chain is Interleukin-5 (IL5) from Sigmodon hispidus (Hispid cotton rat).